We begin with the raw amino-acid sequence, 130 residues long: Arginine decarboxylase proenzyme (130 aa).

S78 functions as the Schiff-base intermediate with substrate; via pyruvic acid in the catalytic mechanism. S78 bears the Pyruvic acid (Ser); by autocatalysis mark. H83 acts as the Proton acceptor; for processing activity in catalysis. Residue C98 is the Proton donor; for catalytic activity of the active site.

Belongs to the prokaryotic AdoMetDC family. Type 1 subfamily. In terms of assembly, heterooctamer of four alpha and four beta chains arranged as a tetramer of alpha/beta heterodimers. The cofactor is pyruvate. In terms of processing, is synthesized initially as an inactive proenzyme. Formation of the active enzyme involves a self-maturation process in which the active site pyruvoyl group is generated from an internal serine residue via an autocatalytic post-translational modification. Two non-identical subunits are generated from the proenzyme in this reaction, and the pyruvate is formed at the N-terminus of the alpha chain, which is derived from the carboxyl end of the proenzyme. The post-translation cleavage follows an unusual pathway, termed non-hydrolytic serinolysis, in which the side chain hydroxyl group of the serine supplies its oxygen atom to form the C-terminus of the beta chain, while the remainder of the serine residue undergoes an oxidative deamination to produce ammonia and the pyruvoyl group blocking the N-terminus of the alpha chain.

It catalyses the reaction L-arginine + H(+) = agmatine + CO2. It participates in amine and polyamine biosynthesis; agmatine biosynthesis; agmatine from L-arginine: step 1/1. Its function is as follows. Specifically catalyzes the decarboxylation of L-arginine to agmatine. Has no S-adenosylmethionine decarboxylase (AdoMetDC) activity. This Sulfolobus acidocaldarius (strain ATCC 33909 / DSM 639 / JCM 8929 / NBRC 15157 / NCIMB 11770) protein is Arginine decarboxylase proenzyme.